The chain runs to 358 residues: Leukotriene B4 receptor 2 (358 aa).

The Extracellular segment spans residues 1–24; sequence MSVCYRPPGNETLLSWKTSRATGT. A glycan (N-linked (GlcNAc...) asparagine) is linked at Asn-10. The chain crosses the membrane as a helical span at residues 25–45; it reads AFLLLAALLGLPGNGFVVWSL. The Cytoplasmic segment spans residues 46-60; sequence AGWRPARGRPLAATL. Residues 61–81 form a helical membrane-spanning segment; the sequence is VLHLALADGAVLLLTPLFVAF. Topologically, residues 82–96 are extracellular; that stretch reads LTRQAWPLGQAGCKA. The chain crosses the membrane as a helical span at residues 97–117; sequence VYYVCALSMYASVLLTGLLSL. The Cytoplasmic segment spans residues 118–140; the sequence is QRCLAVTRPFLAPRLRSPALARR. The helical transmembrane segment at 141–161 threads the bilayer; sequence LLLAVWLAALLLAVPAAVYRH. Residues 162 to 185 lie on the Extracellular side of the membrane; the sequence is LWRDRVCQLCHPSPVHAAAHLSLE. Residues 186–206 traverse the membrane as a helical segment; it reads TLTAFVLPFGLMLGCYSVTLA. The Cytoplasmic portion of the chain corresponds to 207-224; the sequence is RLRGARWGSGRHGARVGR. Residues 225-245 form a helical membrane-spanning segment; the sequence is LVSAIVLAFGLLWAPYHAVNL. Over 246-275 the chain is Extracellular; it reads LQAVAALAPPEGALAKLGGAGQAARAGTTA. A helical membrane pass occupies residues 276-296; sequence LAFFSSSVNPVLYVFTAGDLL. Over 297–358 the chain is Cytoplasmic; it reads PRAGPRFLTR…MEKDGPEWDL (62 aa). The disordered stretch occupies residues 311 to 358; that stretch reads SGEARGGGRSREGTMELRTTPQLKVVGQGRGNGDPGGGMEKDGPEWDL. Gly residues predominate over residues 338–348; it reads QGRGNGDPGGG. Positions 349–358 are enriched in basic and acidic residues; sequence MEKDGPEWDL.

The protein belongs to the G-protein coupled receptor 1 family. Widely expressed.

The protein localises to the cell membrane. Low-affinity receptor for leukotrienes including leukotriene B4. Mediates chemotaxis of granulocytes and macrophages. The response is mediated via G-proteins that activate a phosphatidylinositol-calcium second messenger system. The rank order of affinities for the leukotrienes is LTB4 &gt; 12-epi-LTB4 &gt; LTB5 &gt; LTB3. The sequence is that of Leukotriene B4 receptor 2 (LTB4R2) from Homo sapiens (Human).